The primary structure comprises 484 residues: uncharacterized protein (484 aa).

A run of 12 helical transmembrane segments spans residues 19 to 39 (LSFGVGITLWALIVFAYMIFV), 78 to 98 (VNWGITIGRGIGSVLVGWLIV), 110 to 130 (LFFMLFGIIAPYSPTYAGFII), 134 to 154 (IFAIGGTMQIILIQPVVSNYL), 165 to 185 (FSPFFYPIGTIITLIPFAGII), 199 to 219 (IVFLVIGLLTLIPLIGYIILG), 249 to 269 (TWYWTILYGSWLVAVVFPFTF), 289 to 309 (ISVFLIFFLAGMFLGPFTIGL), 321 to 341 (ISTIITLGVFFYVLATVVFVL), 360 to 380 (LFLFLGLFMGICLWGIQGVML), 398 to 418 (FGLIWGLGYTAFTIATIITSL), and 440 to 460 (LGAYILIIIFSLVSSIGLALL).

The protein localises to the cell membrane. This is an uncharacterized protein from Mesomycoplasma hyopneumoniae (strain J / ATCC 25934 / NCTC 10110) (Mycoplasma hyopneumoniae).